Reading from the N-terminus, the 659-residue chain is Serine/threonine-protein kinase StkP (659 aa).

Over 1–342 the chain is Cytoplasmic; that stretch reads MIQIGKIFAG…PQAPKKHRFK (342 aa). Residues 12–273 form the Protein kinase domain; it reads YRIVKQIGRG…EMYVDLSSSL (262 aa). ATP-binding positions include 18-26 and K42; that span reads IGRGGMADV. D136 acts as the Proton acceptor in catalysis. A helical membrane pass occupies residues 343–363; sequence MRYLILLASLVLVAASLIWIL. Residues 364–659 are Extracellular-facing; the sequence is SRTPATIAIP…YKPKTTSATP (296 aa). PASTA domains lie at 366–433, 434–505, 506–577, and 578–651; these read TPAT…VVSS, GKQS…TVAK, KATT…TVAK, and KVTS…SIYK. The tract at residues 541 to 561 is disordered; sequence EEESSESEPGTIMKQSPGAGT.

The protein belongs to the protein kinase superfamily. Ser/Thr protein kinase family. Homodimer. StkP forms dimers through its transmembrane and extracellular domains. Dimer formation likely promotes autophosphorylation activity and might be necessary for targeting StkP substrate. Autophosphorylation occurs predominantly at the threonine residue and weakly at the serine residue. Dephosphorylated by PhpP.

The protein resides in the cell membrane. It catalyses the reaction L-seryl-[protein] + ATP = O-phospho-L-seryl-[protein] + ADP + H(+). It carries out the reaction L-threonyl-[protein] + ATP = O-phospho-L-threonyl-[protein] + ADP + H(+). Functionally, protein kinase involved in signal transduction pathways that regulate various cellular processes. Likely senses intracellular peptidoglycan subunits present in the cell division septa of actively growing cells; thus, intracellular unlinked peptidoglycan may serve as the signal molecules that trigger StkP phosphorylation activity on a set of substrates. Plays a crucial role in the regulation of cell shape and cell division of S.pneumoniae through control of at least DivIVA activity. Is involved in competence triggering, and is required for the expression of the central competence operon comCDE. StkP also plays an important role for bacterial survival in vivo. Identified target substrates that are specifically phosphorylated by StkP in vivo, mainly on threonine residues, are DivIVA, GlmM, PpaC, MapZ, KhpB (also called EloR/Jag, shown in strains R6 and Rx1) and StkP itself. Autophosphorylated StkP is a substrate for the cotranscribed protein phosphatase PhpP (shown in the avirulent strain Rx / Cp1015); PhpP and StkP appear to constitute a functional signaling couple in vivo. This is Serine/threonine-protein kinase StkP (stkP) from Streptococcus pneumoniae serotype 2 (strain D39 / NCTC 7466).